A 258-amino-acid polypeptide reads, in one-letter code: Tryptophan synthase alpha chain (258 aa).

Active-site proton acceptor residues include Glu46 and Asp57.

This sequence belongs to the TrpA family. As to quaternary structure, tetramer of two alpha and two beta chains.

The enzyme catalyses (1S,2R)-1-C-(indol-3-yl)glycerol 3-phosphate + L-serine = D-glyceraldehyde 3-phosphate + L-tryptophan + H2O. Its pathway is amino-acid biosynthesis; L-tryptophan biosynthesis; L-tryptophan from chorismate: step 5/5. In terms of biological role, the alpha subunit is responsible for the aldol cleavage of indoleglycerol phosphate to indole and glyceraldehyde 3-phosphate. In Phocaeicola vulgatus (strain ATCC 8482 / DSM 1447 / JCM 5826 / CCUG 4940 / NBRC 14291 / NCTC 11154) (Bacteroides vulgatus), this protein is Tryptophan synthase alpha chain.